The primary structure comprises 226 residues: Cytochrome c biogenesis ATP-binding export protein CcmA (226 aa).

In terms of domain architecture, ABC transporter spans 19-226; that stretch reads LRANDLAFSR…LGGAHALPPA (208 aa). 51–58 provides a ligand contact to ATP; it reads GPNGSGKS.

Belongs to the ABC transporter superfamily. CcmA exporter (TC 3.A.1.107) family. The complex is composed of two ATP-binding proteins (CcmA) and two transmembrane proteins (CcmB).

The protein localises to the cell inner membrane. It carries out the reaction heme b(in) + ATP + H2O = heme b(out) + ADP + phosphate + H(+). Functionally, part of the ABC transporter complex CcmAB involved in the biogenesis of c-type cytochromes; once thought to export heme, this seems not to be the case, but its exact role is uncertain. Responsible for energy coupling to the transport system. The protein is Cytochrome c biogenesis ATP-binding export protein CcmA of Cupriavidus pinatubonensis (strain JMP 134 / LMG 1197) (Cupriavidus necator (strain JMP 134)).